The sequence spans 534 residues: Kelch repeat and BTB domain-containing protein 4 (534 aa).

One can recognise a BTB domain in the interval 61–128; it reads ADVTISVEGR…IYHGTVKLRA (68 aa). One can recognise a BACK domain in the interval 163 to 255; it reads CLQVMWLADR…SLKEIGENVH (93 aa). Kelch repeat units lie at residues 255–301, 302–344, 347–394, 396–446, and 448–497; these read HIYL…KHGG, DLYV…SVPG, AIYS…NLNG, IYLL…VHKD, and VFIV…VFRD.

Component of the BCR(KBTBD4) E3 ubiquitin ligase complex, at least composed of CUL3, KBTBD4 and RBX1.

Functionally, substrate-specific adapter of a BCR (BTB-CUL3-RBX1) E3 ubiquitin ligase complex which targets CoREST corepressor complex components RCOR1, KDM1A/LSD1 and HDAC2 for proteasomal degradation. RCOR1 is likely to be the primary target while degradation of KDM1A and HDAC2 is likely due to their association with RCOR1. Also targets RCOR3, MIER2 and MIER3 for proteasomal degradation as well as associated proteins ZNF217 and RREB1. Degradation is dependent on the presence of an ELM2 domain in the target proteins. This is Kelch repeat and BTB domain-containing protein 4 (Kbtbd4) from Mus musculus (Mouse).